The primary structure comprises 337 residues: MKKIPVGIVGVSGYTGLELLKMLLEHPYLELVYAANTEGGVRVGALHSSLQGVSDLSVEKADPKEAAKRCELLFLALPHQSAMEFAKEVLSLGKKVVDLSADYRLSLERYEAHYCPHLDKENLSHAVYGLIEWAREEIVQARLIANPGCYPTATLLGILPFIPYLDEDSSLFVDAKSGVSGAGKKLTHNTHYPTINENLFAYSPLSHRHEPEIAEKIELWGKKAKKVNFIPHLTPLTRGMLVSTFARLKEPVDAMAILRERYANEPFIRLRSSPVEIKAVAGTHFCDIYAMSQGRDLWVNSAIDNLLRGASSQAIANANLMLGLPEGAGLPRFAYAP.

Cys149 is a catalytic residue.

It belongs to the NAGSA dehydrogenase family. Type 1 subfamily.

The protein resides in the cytoplasm. The catalysed reaction is N-acetyl-L-glutamate 5-semialdehyde + phosphate + NADP(+) = N-acetyl-L-glutamyl 5-phosphate + NADPH + H(+). It functions in the pathway amino-acid biosynthesis; L-arginine biosynthesis; N(2)-acetyl-L-ornithine from L-glutamate: step 3/4. Its function is as follows. Catalyzes the NADPH-dependent reduction of N-acetyl-5-glutamyl phosphate to yield N-acetyl-L-glutamate 5-semialdehyde. This chain is N-acetyl-gamma-glutamyl-phosphate reductase, found in Wolinella succinogenes (strain ATCC 29543 / DSM 1740 / CCUG 13145 / JCM 31913 / LMG 7466 / NCTC 11488 / FDC 602W) (Vibrio succinogenes).